The following is a 919-amino-acid chain: DNA double-strand break repair Rad50 ATPase (919 aa).

ATP is bound by residues 33–39 (NGAGKST) and glutamine 143. Coiled-coil stretches lie at residues 208–268 (MTLR…MLVN), 315–379 (HEVA…RRYT), and 414–458 (ESVL…LEES). Residues 417 to 516 (LERLDAVIND…EASRLQDKRR (100 aa)) enclose the Zinc-hook domain. Zn(2+) is bound by residues cysteine 464 and cysteine 467. 3 coiled-coil regions span residues 486–515 (EAERLRKAAKEKAAEAEKARAEASRLQDKR), 541–595 (EDLA…LQRL), and 635–749 (AYRS…RKAS).

Belongs to the SMC family. RAD50 subfamily. Homodimer. Forms a heterotetramer composed of two Mre11 subunits and two Rad50 subunits. The cofactor is Zn(2+).

Part of the Rad50/Mre11 complex, which is involved in the early steps of DNA double-strand break (DSB) repair. The complex may facilitate opening of the processed DNA ends to aid in the recruitment of HerA and NurA. Rad50 controls the balance between DNA end bridging and DNA resection via ATP-dependent structural rearrangements of the Rad50/Mre11 complex. The protein is DNA double-strand break repair Rad50 ATPase of Aeropyrum pernix (strain ATCC 700893 / DSM 11879 / JCM 9820 / NBRC 100138 / K1).